The following is a 393-amino-acid chain: PPE family protein PPE26 (393 aa).

Belongs to the mycobacterial PPE family. In terms of assembly, interacts with human TLR2.

Functionally, probably plays a key role in regulating innate and adaptive immune responses through human Toll-like receptor 2 (TLR2). Interacts with TLR2, leading to the subsequent activation of the mitogen-activated protein kinase (MAPK) and nuclear factor kappa B (NF-kappa-B) signaling pathways. Stimulates macrophage activation by augmenting pro-inflammatory cytokine production (TNF-alpha, IL-6 and IL-12p40) and the expression of cell surface molecules (CD80, CD86, MHC class I and II). Also participates in adaptive immunity by directing Th1-polarised immune responses. This Mycobacterium tuberculosis (strain ATCC 25618 / H37Rv) protein is PPE family protein PPE26.